The primary structure comprises 378 residues: MTTQFSVAGVELELLRYPAQQESNLQAWDAADEHLLKSLIESEQAAVPTAIVNDSFGALSCGLSKLHPSWPLFVETDARTSFLGTEQNHGRNQLPMDNLQRFTSRDTLPENLALVLMKLPKNLSYFAHQLTRLSQVLPAGTRVLVAAKAKSINSALLDIFAKHLGPASASLAWKNTRVITCVSDGKPRPLAKEVTWAVPEYQLEISNLSNVFAANKLDIGARIMLENLPKGNFKSIVDLGCGNGVLGLRTAQLSPEADIHFIDDSEMAVASAKANWARNQLPADKGHFYWDDCMTHLPEEVQPDLVLCNPPFHQGEAITDHIAWQMFLDARRRLKEGGILHIVGNRHLAYHVKLQRLFKNCTTVASNGKFVILQAQKK.

This sequence belongs to the methyltransferase superfamily. RlmG family.

The protein resides in the cytoplasm. The enzyme catalyses guanosine(1835) in 23S rRNA + S-adenosyl-L-methionine = N(2)-methylguanosine(1835) in 23S rRNA + S-adenosyl-L-homocysteine + H(+). Its function is as follows. Specifically methylates the guanine in position 1835 (m2G1835) of 23S rRNA. The polypeptide is Ribosomal RNA large subunit methyltransferase G (Shewanella putrefaciens (strain CN-32 / ATCC BAA-453)).